A 143-amino-acid polypeptide reads, in one-letter code: Nucleoside diphosphate kinase (143 aa).

ATP is bound by residues Lys11, Phe59, Arg87, Thr93, Arg104, and Asn114. The active-site Pros-phosphohistidine intermediate is the His117.

This sequence belongs to the NDK family. As to quaternary structure, homotetramer. The cofactor is Mg(2+).

It localises to the cytoplasm. The catalysed reaction is a 2'-deoxyribonucleoside 5'-diphosphate + ATP = a 2'-deoxyribonucleoside 5'-triphosphate + ADP. It carries out the reaction a ribonucleoside 5'-diphosphate + ATP = a ribonucleoside 5'-triphosphate + ADP. Its function is as follows. Major role in the synthesis of nucleoside triphosphates other than ATP. The ATP gamma phosphate is transferred to the NDP beta phosphate via a ping-pong mechanism, using a phosphorylated active-site intermediate. In Pseudomonas aeruginosa (strain UCBPP-PA14), this protein is Nucleoside diphosphate kinase.